A 974-amino-acid chain; its full sequence is Toxin subunit YenC1 (974 aa).

RHS repeat units lie at residues 165–179, 290–304, 322–336, 354–368, 398–412, 490–504, 570–584, 596–610, and 630–644; these read AGQC…GLNQ, GVLT…TQRL, FQDL…GNVL, VPEN…YQLV, NYIR…GNLM, SDSE…SQRV, NDEL…IGSS, SQEE…AVWM, and DATG…YYQP. An RHS-repeat associated core domain region spans residues 600–680; sequence YYPYGGTAVW…PIVLHDPDGL (81 aa). The segment at 699–940 is cytotoxic necrotising factor domain; sequence ISSLKGTGPF…GEVSASTLLE (242 aa).

Belongs to the RHS family. Semipurified toxin complex consists of at least YenA1-YenA2-YenB-YenC1-YenC2-Chi1-Chi2. The Yen-TC:K9 subcomplex is about 26 nm tall and 22 nm in diameter with 5-fold symmetry and 5 copies of YenA1, YenA2, Chi1 and Chi2; the chitinase subunits may be solvent accessible on the exterior the complex. The Yen-TC:K9 subcomplex has no insecticidal activity. The native complex with additional YenB, YenC1 and YenC2 subunits is 16 nm taller and is insecticidal; the toxicity-conferring subunits are present at about 1 copy each.

The protein localises to the secreted. With respect to regulation, toxin complex is secreted when grown at 25 degrees Celsius or less; at higher temperatures the proteins are present intracellularly but not secreted. Part of an orally active toxin complex (TC) with strong insecticidal effects on larvae of the Coleoptera Costelytra zealandica, Acrossidius tasmania and Adoryphorus couloni and some Lepidoptera larvae. The TC has an endochitinase activity. The protein is Toxin subunit YenC1 of Yersinia entomophaga.